The following is a 449-amino-acid chain: PGL/p-HBAD biosynthesis rhamnosyltransferase (449 aa).

Belongs to the glycosyltransferase 28 family.

Catalyzes the transfer of the first rhamnosyl residue on p-hydroxybenzoic acid or phenolphthiocerol derivatives to form, after O-methylation at position 2 of the sugar unit, mono-O-methyl-glycosyl-p-hydroxybenzoic acid derivative (p-HBAD I) and 2-O-methyl-rhamnosyl-phenolphthiocerol dimycocerosate (also called mycoside B) during p-hydroxybenzoic acid derivatives (p-HBAD) and glycosylated phenolphthiocerol dimycocerosates (PGL) biosynthesis. In Mycobacterium bovis (strain BCG / Pasteur 1173P2), this protein is PGL/p-HBAD biosynthesis rhamnosyltransferase.